A 149-amino-acid chain; its full sequence is SsrA-binding protein (149 aa).

It belongs to the SmpB family.

Its subcellular location is the cytoplasm. In terms of biological role, required for rescue of stalled ribosomes mediated by trans-translation. Binds to transfer-messenger RNA (tmRNA), required for stable association of tmRNA with ribosomes. tmRNA and SmpB together mimic tRNA shape, replacing the anticodon stem-loop with SmpB. tmRNA is encoded by the ssrA gene; the 2 termini fold to resemble tRNA(Ala) and it encodes a 'tag peptide', a short internal open reading frame. During trans-translation Ala-aminoacylated tmRNA acts like a tRNA, entering the A-site of stalled ribosomes, displacing the stalled mRNA. The ribosome then switches to translate the ORF on the tmRNA; the nascent peptide is terminated with the 'tag peptide' encoded by the tmRNA and targeted for degradation. The ribosome is freed to recommence translation, which seems to be the essential function of trans-translation. This Anaplasma phagocytophilum (strain HZ) protein is SsrA-binding protein.